Reading from the N-terminus, the 260-residue chain is Carbonic anhydrase 2 (260 aa).

Ser-2 carries the post-translational modification N-acetylserine. Position 2 is a phosphoserine (Ser-2). The Alpha-carbonic anhydrase domain maps to 3–259 (HHWGYGKHNG…LKGRQVKASF (257 aa)). The active-site Proton donor/acceptor is the His-64. The Zn(2+) site is built by His-94, His-96, and His-119. A phosphoserine mark is found at Ser-165 and Ser-172. 198-199 (TT) is a binding site for substrate.

Belongs to the alpha-carbonic anhydrase family. Interacts with SLC4A4 and SLC26A6. Interaction with SLC4A7 regulates SLC4A7 transporter activity. Zn(2+) serves as cofactor.

It is found in the cytoplasm. Its subcellular location is the cell membrane. The enzyme catalyses hydrogencarbonate + H(+) = CO2 + H2O. The catalysed reaction is urea = cyanamide + H2O. Inhibited by acetazolamide. Its function is as follows. Catalyzes the reversible hydration of carbon dioxide. Can also hydrate cyanamide to urea. Involved in the regulation of fluid secretion into the anterior chamber of the eye. Essential for bone resorption and osteoclast differentiation. Contributes to intracellular pH regulation in the duodenal upper villous epithelium during proton-coupled peptide absorption. Stimulates the chloride-bicarbonate exchange activity of SLC26A6. In Oryctolagus cuniculus (Rabbit), this protein is Carbonic anhydrase 2 (CA2).